Here is a 953-residue protein sequence, read N- to C-terminus: ALS2 C-terminal-like protein (953 aa).

8 MORN repeats span residues 358–380 (YEGE…DGRN), 381–403 (HVGD…QASE), 409–431 (YKCH…TSEV), 432–454 (YKGY…PQAP), 459–481 (YTGH…DRGE), 483–505 (YIGM…AGVC), 506–528 (YQGT…DDSL), and 529–552 (YEGT…NGFT). One can recognise a VPS9 domain in the interval 796–942 (LFPDARLLEF…IQKEDMRLHR (147 aa)).

As to quaternary structure, homodimer. Forms a heteromeric complex with ALS2. Interacts with ALS2 and RAB5A.

It is found in the cytoplasm. Its function is as follows. Acts as a guanine nucleotide exchange factor (GEF) for Rab5 GTPase. Regulates the ALS2-mediated endosome dynamics. This chain is ALS2 C-terminal-like protein (ALS2CL), found in Bos taurus (Bovine).